Here is a 389-residue protein sequence, read N- to C-terminus: Putative 8-amino-7-oxononanoate synthase (389 aa).

R22 serves as a coordination point for substrate. 109 to 110 (GY) contributes to the pyridoxal 5'-phosphate binding site. H134 serves as a coordination point for substrate. Residues S182, 207-210 (DDAH), and 238-241 (TLSK) contribute to the pyridoxal 5'-phosphate site. K241 bears the N6-(pyridoxal phosphate)lysine mark. Residue T350 participates in substrate binding.

The protein belongs to the class-II pyridoxal-phosphate-dependent aminotransferase family. BioF subfamily. As to quaternary structure, homodimer. Pyridoxal 5'-phosphate is required as a cofactor.

It carries out the reaction 6-carboxyhexanoyl-[ACP] + L-alanine + H(+) = (8S)-8-amino-7-oxononanoate + holo-[ACP] + CO2. It functions in the pathway cofactor biosynthesis; biotin biosynthesis. Catalyzes the decarboxylative condensation of pimeloyl-[acyl-carrier protein] and L-alanine to produce 8-amino-7-oxononanoate (AON), [acyl-carrier protein], and carbon dioxide. This Parvibaculum lavamentivorans (strain DS-1 / DSM 13023 / NCIMB 13966) protein is Putative 8-amino-7-oxononanoate synthase (bioF).